The chain runs to 557 residues: Aspartate--tRNA ligase, cytoplasmic (557 aa).

Over residues M1–E12 the composition is skewed to basic and acidic residues. Residues M1 to N74 are disordered. S2 is modified (N-acetylserine). S14 is modified (phosphoserine). Residues L37 to N74 show a composition bias toward basic and acidic residues. Position 281 (E281) interacts with L-aspartate. S301 bears the Phosphoserine mark. The aspartate stretch occupies residues Q303 to K306. R325 contacts L-aspartate. ATP contacts are provided by residues R325–E327, R333–M335, and E478. Residues S481 and R485 each coordinate L-aspartate. S502 is subject to Phosphoserine. G528–R531 contributes to the ATP binding site. Phosphoserine is present on S546.

The protein belongs to the class-II aminoacyl-tRNA synthetase family. Type 2 subfamily. In terms of assembly, homodimer.

The protein resides in the cytoplasm. The catalysed reaction is tRNA(Asp) + L-aspartate + ATP = L-aspartyl-tRNA(Asp) + AMP + diphosphate. The sequence is that of Aspartate--tRNA ligase, cytoplasmic (DPS1) from Saccharomyces cerevisiae (strain ATCC 204508 / S288c) (Baker's yeast).